Consider the following 190-residue polypeptide: Adenine phosphoribosyltransferase (190 aa).

It belongs to the purine/pyrimidine phosphoribosyltransferase family. As to quaternary structure, homodimer.

The protein localises to the cytoplasm. It catalyses the reaction AMP + diphosphate = 5-phospho-alpha-D-ribose 1-diphosphate + adenine. The protein operates within purine metabolism; AMP biosynthesis via salvage pathway; AMP from adenine: step 1/1. Functionally, catalyzes a salvage reaction resulting in the formation of AMP, that is energically less costly than de novo synthesis. The sequence is that of Adenine phosphoribosyltransferase from Cupriavidus pinatubonensis (strain JMP 134 / LMG 1197) (Cupriavidus necator (strain JMP 134)).